Reading from the N-terminus, the 599-residue chain is Putative fused cobalt transport protein CbiMQ (599 aa).

A cbiM region spans residues 1–239 (MHIMEGFLPS…LLPSSDQNLS (239 aa)). Transmembrane regions (helical) follow at residues 12 to 32 (WWQF…AALI), 44 to 64 (LLGL…PSVG), 74 to 94 (FGAI…VLVF), 106 to 126 (TLGA…CIIF), 140 to 160 (SFSV…YMMT), 162 to 182 (LQLA…FVVY), 183 to 203 (LGIF…LIVL), 247 to 267 (IIAG…LAGL), 303 to 323 (WLFA…LYLL), 356 to 376 (QVSA…GVTS), 377 to 397 (PLPY…LIIA), 407 to 427 (LLTI…LITG), 438 to 458 (IGAF…LVLS), 463 to 483 (GMCS…FSVL), 493 to 513 (IDLS…AIAI), and 579 to 599 (MAVF…MLLL). Residues 341 to 599 (DEHILDDVAI…GLLCAEMLLL (259 aa)) are cbiQ.

The protein in the N-terminal section; belongs to the CbiM family. In the C-terminal section; belongs to the CbiQ family. In terms of assembly, forms an energy-coupling factor (ECF) transporter complex composed of an ATP-binding protein (A component, CbiO), a transmembrane protein (T component, CbiQ) and 2 possible substrate-capture proteins (S components, CbiM and CbiN) of unknown stoichimetry.

It is found in the cell membrane. It participates in cofactor biosynthesis; adenosylcobalamin biosynthesis. In terms of biological role, part of the energy-coupling factor (ECF) transporter complex CbiMNOQ involved in cobalt import. The protein is Putative fused cobalt transport protein CbiMQ (cbiMQ) of Methanocorpusculum labreanum (strain ATCC 43576 / DSM 4855 / Z).